A 130-amino-acid chain; its full sequence is Small ribosomal subunit protein uS11 (130 aa).

It belongs to the universal ribosomal protein uS11 family. As to quaternary structure, part of the 30S ribosomal subunit. Interacts with proteins S7 and S18. Binds to IF-3.

Its function is as follows. Located on the platform of the 30S subunit, it bridges several disparate RNA helices of the 16S rRNA. Forms part of the Shine-Dalgarno cleft in the 70S ribosome. The sequence is that of Small ribosomal subunit protein uS11 from Pseudoalteromonas atlantica (strain T6c / ATCC BAA-1087).